The primary structure comprises 316 residues: DNA-directed RNA polymerase III subunit RPC6 (316 aa).

Ala2 carries the N-acetylalanine modification. Glycyl lysine isopeptide (Lys-Gly) (interchain with G-Cter in SUMO2) cross-links involve residues Lys5 and Lys7. Residues Cys287, Cys290, Cys296, and Cys307 each coordinate [4Fe-4S] cluster.

Belongs to the eukaryotic RPC34/RPC39 RNA polymerase subunit family. As to quaternary structure, component of the RNA polymerase III complex consisting of 17 subunits: a ten-subunit horseshoe-shaped catalytic core composed of POLR3A/RPC1, POLR3B/RPC2, POLR1C/RPAC1, POLR1D/RPAC2, POLR3K/RPC10, POLR2E/RPABC1, POLR2F/RPABC2, POLR2H/RPABC3, POLR2K/RPABC4 and POLR2L/RPABC5; a mobile stalk composed of two subunits POLR3H/RPC8 and CRCP/RPC9, protruding from the core and functioning primarily in transcription initiation; and additional subunits homologous to general transcription factors of the RNA polymerase II machinery, POLR3C/RPC3-POLR3F/RPC6-POLR3G/RPC7 heterotrimer required for transcription initiation and POLR3D/RPC4-POLR3E/RPC5 heterodimer involved in both transcription initiation and termination. Directly interacts with POLR3C. Interacts with TBP and TFIIIB90 and GTF3C4. Interacts with MAF1. As part of the RNA polymerase III complex, interacts with PKP2.

Its subcellular location is the nucleus. DNA-dependent RNA polymerase catalyzes the transcription of DNA into RNA using the four ribonucleoside triphosphates as substrates. Specific peripheric component of RNA polymerase III (Pol III) which synthesizes small non-coding RNAs including 5S rRNA, snRNAs, tRNAs and miRNAs from at least 500 distinct genomic loci. Part of POLR3C/RPC3-POLR3F/RPC6-POLR3G/RPC7 heterotrimer that coordinates the dynamics of Pol III stalk and clamp modules during the transition from apo to elongation state. Pol III plays a key role in sensing and limiting infection by intracellular bacteria and DNA viruses, including varicella zoster virus. Acts as a nuclear and cytosolic DNA sensor detecting AT-rich DNA, involved in innate immune response. Can sense non-self dsDNA that serves as template for transcription into dsRNA. The non-self RNA polymerase III transcripts, such as Epstein-Barr virus-encoded RNAs (EBERs) induce type I interferon and NF-kappa-B through the RIG-I pathway. Preferentially binds double-stranded DNA (dsDNA). In Homo sapiens (Human), this protein is DNA-directed RNA polymerase III subunit RPC6.